A 466-amino-acid chain; its full sequence is UDP-N-acetylmuramoylalanine--D-glutamate ligase (466 aa).

Position 115 to 121 (115 to 121 (GTDGKTT)) interacts with ATP.

It belongs to the MurCDEF family.

It is found in the cytoplasm. It carries out the reaction UDP-N-acetyl-alpha-D-muramoyl-L-alanine + D-glutamate + ATP = UDP-N-acetyl-alpha-D-muramoyl-L-alanyl-D-glutamate + ADP + phosphate + H(+). It functions in the pathway cell wall biogenesis; peptidoglycan biosynthesis. Its function is as follows. Cell wall formation. Catalyzes the addition of glutamate to the nucleotide precursor UDP-N-acetylmuramoyl-L-alanine (UMA). This Chlorobium phaeobacteroides (strain BS1) protein is UDP-N-acetylmuramoylalanine--D-glutamate ligase.